The following is a 452-amino-acid chain: Down-regulator of invasive growth 1 (452 aa).

Disordered stretches follow at residues 1 to 145 and 262 to 311; these read MAVS…SAPA and RNKR…ADLR. Polar residues-rich tracts occupy residues 12 to 22 and 35 to 53; these read EDTSIAKSTQD and KGSS…SVGQ. Residue Ser45 is modified to Phosphoserine. Residues 61–77 show a composition bias toward acidic residues; it reads PEEDDSGDKEADHEDSE. A compositionally biased stretch (basic residues) spans 81-100; it reads AKKRKAQPLKNPKKSLKRGR. 4 stretches are compositionally biased toward polar residues: residues 107–116, 124–145, 269–281, and 291–307; these read LSDSNTNTHG, LASS…SAPA, SYDS…ASTG, and RNSS…TQQR. 4 positions are modified to phosphoserine: Ser126, Ser142, Ser272, and Ser275. Residues 212–452 are interaction with FUS3 and KSS1; the sequence is IPPPHMLNKP…KSSSHHRTGK (241 aa). Ser330 carries the phosphoserine modification. The span at 331–348 shows a compositional bias: low complexity; that stretch reads ANTKARSASTSTSTSTST. The disordered stretch occupies residues 331–395; sequence ANTKARSAST…QRTSQPQQQS (65 aa). Residues 349–361 show a composition bias toward basic and acidic residues; it reads NRDRSSWHEAEPN. Residues 362–372 show a composition bias toward acidic residues; it reads KDEEEGTDLAI. Residues 378 to 395 are compositionally biased toward low complexity; it reads PTPTFTTFQRTSQPQQQS. A Phosphothreonine modification is found at Thr379. Phosphoserine is present on residues Ser395 and Ser428.

Forms a complex with DIG2, STE12 and either FUS3 or KSS1. The interaction of FUS3 with STE12 depends on the presence of both DIG1 and DIG2. STE12 is lost from FUS3/DIG1/DIG2 complex after pheromone treatment. DIG1 and DIG2 have also been reported to interact with CLN1 and CLN2. In terms of processing, phosphorylated by FUS3 and KSS1, in a pheromone-stimulated manner. Phosphorylation reduces the affinity for STE12.

The protein resides in the nucleus. Functionally, DIG1 and DIG2 are negative regulators of the filamentation and pheromone induced mating program. DIG1 and DIG2 inhibit the transcriptional activity of STE12 by direct protein-protein interaction. DIG1 colocalizes to promoters with STE12 and redistributes with it during induction of filamentation (by butanol) or mating (by pheromone) to program specific genes, but binding of DIG1 to STE12 is reduced by pheromone treatment. In Saccharomyces cerevisiae (strain ATCC 204508 / S288c) (Baker's yeast), this protein is Down-regulator of invasive growth 1 (DIG1).